We begin with the raw amino-acid sequence, 115 residues long: UPF0125 protein VP0646 (115 aa).

The interval 92–115 (RAEQAKAAGNADPVTGGKPNALRK) is disordered.

The protein belongs to the UPF0125 (RnfH) family.

The polypeptide is UPF0125 protein VP0646 (Vibrio parahaemolyticus serotype O3:K6 (strain RIMD 2210633)).